A 151-amino-acid polypeptide reads, in one-letter code: Putative pre-16S rRNA nuclease (151 aa).

It belongs to the YqgF nuclease family.

It is found in the cytoplasm. In terms of biological role, could be a nuclease involved in processing of the 5'-end of pre-16S rRNA. The polypeptide is Putative pre-16S rRNA nuclease (Aster yellows witches'-broom phytoplasma (strain AYWB)).